The following is a 36-amino-acid chain: Photosystem I reaction center subunit VIII (36 aa).

Residues 9–29 (ILVPLVGLIFPAFSMALFFLY) form a helical membrane-spanning segment.

Belongs to the PsaI family.

The protein localises to the plastid. Its subcellular location is the chloroplast thylakoid membrane. May help in the organization of the PsaL subunit. The sequence is that of Photosystem I reaction center subunit VIII from Thalassiosira pseudonana (Marine diatom).